The chain runs to 347 residues: 4-hydroxy-2-oxovalerate aldolase (347 aa).

In terms of domain architecture, Pyruvate carboxyltransferase spans 2–252 (ILISDATLRD…DTRTTFERVM (251 aa)). 10–11 (RD) contacts substrate. Residue D11 coordinates Mn(2+). The active-site Proton acceptor is H14. Substrate-binding residues include S164 and H191. Positions 191 and 193 each coordinate Mn(2+).

Belongs to the 4-hydroxy-2-oxovalerate aldolase family.

It catalyses the reaction (S)-4-hydroxy-2-oxopentanoate = acetaldehyde + pyruvate. The chain is 4-hydroxy-2-oxovalerate aldolase (mhpE) from Burkholderia pseudomallei (strain 1710b).